The sequence spans 112 residues: Nucleoid-associated protein CPR_0056 (112 aa).

Residues 91-100 (ASEETSEKMG) show a composition bias toward basic and acidic residues. A disordered region spans residues 91 to 112 (ASEETSEKMGKLTGGMGMPGLF). Residues 102–112 (LTGGMGMPGLF) are compositionally biased toward gly residues.

It belongs to the YbaB/EbfC family. As to quaternary structure, homodimer.

The protein resides in the cytoplasm. It is found in the nucleoid. Its function is as follows. Binds to DNA and alters its conformation. May be involved in regulation of gene expression, nucleoid organization and DNA protection. This chain is Nucleoid-associated protein CPR_0056, found in Clostridium perfringens (strain SM101 / Type A).